Consider the following 122-residue polypeptide: Small ribosomal subunit protein uS13 (122 aa).

A disordered region spans residues G95 to K122.

This sequence belongs to the universal ribosomal protein uS13 family. In terms of assembly, part of the 30S ribosomal subunit. Forms a loose heterodimer with protein S19. Forms two bridges to the 50S subunit in the 70S ribosome.

In terms of biological role, located at the top of the head of the 30S subunit, it contacts several helices of the 16S rRNA. In the 70S ribosome it contacts the 23S rRNA (bridge B1a) and protein L5 of the 50S subunit (bridge B1b), connecting the 2 subunits; these bridges are implicated in subunit movement. Contacts the tRNAs in the A and P-sites. This Nitratidesulfovibrio vulgaris (strain ATCC 29579 / DSM 644 / CCUG 34227 / NCIMB 8303 / VKM B-1760 / Hildenborough) (Desulfovibrio vulgaris) protein is Small ribosomal subunit protein uS13.